A 486-amino-acid polypeptide reads, in one-letter code: MSLKEDDFGKDNSRNIESYTGRIFDVYIQKDSYSQSALDDMFPEAVVSTAACVKNEAEDNINLIDTHPQFELVNTGLGAKSDDLKSPSAKATFTDKQRKNEVPNISVSNYFPGQSSETSSTTESWTIGCDKWSEKVEEAFLEALRLIMKNGTTKIKIRNANFGRNELISLYIKHKTNEFRTKKQISSHIQVWKKTIQNKIKDSLTLSSKEKELLHLIEHGAEQTTENSNLFYDIFEEIIDSLPSVSDSGSLTPKNLYVSNNSSGLSVHSKLLTPITASNEKKIENFIKTNAASQAKTPLIYAKHIYENIDGYKCVPSKRPLEQLSPTELHQGDRPNKASFSNKKAILESAKKIEIEQRKIINKYQRISRIQEHESNPEFSSNSNSGSEYESEEEVVPRSATVTQLQSRPVPYYKNNGMPYSLSKVRGRPMYPRPAEDAYNANYIQGLPQYQTSYFSQLLLSSPQHYEHSPHQRNFTPSNQSHGNFY.

Ser-2 carries the N-acetylserine modification. Residues Trp-125 to Lys-199 constitute a DNA-binding region (TEA). Residue Ser-325 is modified to Phosphoserine. Disordered stretches follow at residues Glu-372 to Val-410 and His-465 to Tyr-486. Residues Pro-377 to Glu-388 are compositionally biased toward low complexity. A compositionally biased stretch (polar residues) spans Gln-472–Tyr-486.

Belongs to the TEC1 family.

The protein localises to the nucleus. Functionally, TEC1 is involved in the activation of TY1 and TY1-mediated gene expression. It is not involved in mating or sporulation processes. This Saccharomyces cerevisiae (strain ATCC 204508 / S288c) (Baker's yeast) protein is Ty transcription activator TEC1 (TEC1).